We begin with the raw amino-acid sequence, 943 residues long: Isoleucine--tRNA ligase (943 aa).

The 'HIGH' region signature appears at 59 to 69 (PYANGRIHLGH). Residue E577 coordinates L-isoleucyl-5'-AMP. The 'KMSKS' region motif lies at 618 to 622 (KMSKS). Position 621 (K621) interacts with ATP. Zn(2+) contacts are provided by C906, C909, C926, and C929.

Belongs to the class-I aminoacyl-tRNA synthetase family. IleS type 1 subfamily. As to quaternary structure, monomer. Requires Zn(2+) as cofactor.

The protein localises to the cytoplasm. The catalysed reaction is tRNA(Ile) + L-isoleucine + ATP = L-isoleucyl-tRNA(Ile) + AMP + diphosphate. Functionally, catalyzes the attachment of isoleucine to tRNA(Ile). As IleRS can inadvertently accommodate and process structurally similar amino acids such as valine, to avoid such errors it has two additional distinct tRNA(Ile)-dependent editing activities. One activity is designated as 'pretransfer' editing and involves the hydrolysis of activated Val-AMP. The other activity is designated 'posttransfer' editing and involves deacylation of mischarged Val-tRNA(Ile). This is Isoleucine--tRNA ligase from Stenotrophomonas maltophilia (strain K279a).